Here is a 240-residue protein sequence, read N- to C-terminus: DUP240 protein DFP1 (240 aa).

The disordered stretch occupies residues 1 to 29 (MQPYLKKNTHATDDPKASPLKEGSPDNPE). Helical transmembrane passes span 61-81 (IMINFLLFVVTILATLTDIWF) and 84-104 (VLSPAMVIRICLGGSMVVLQI).

It belongs to the DUP/COS family.

It is found in the membrane. The sequence is that of DUP240 protein DFP1 from Saccharomyces cerevisiae (Baker's yeast).